The chain runs to 182 residues: ATP synthase subunit delta (182 aa).

The protein belongs to the ATPase delta chain family. F-type ATPases have 2 components, F(1) - the catalytic core - and F(0) - the membrane proton channel. F(1) has five subunits: alpha(3), beta(3), gamma(1), delta(1), epsilon(1). CF(0) has four main subunits: a(1), b(1), b'(1) and c(10-14). The alpha and beta chains form an alternating ring which encloses part of the gamma chain. F(1) is attached to F(0) by a central stalk formed by the gamma and epsilon chains, while a peripheral stalk is formed by the delta, b and b' chains.

The protein resides in the cellular thylakoid membrane. In terms of biological role, f(1)F(0) ATP synthase produces ATP from ADP in the presence of a proton or sodium gradient. F-type ATPases consist of two structural domains, F(1) containing the extramembraneous catalytic core and F(0) containing the membrane proton channel, linked together by a central stalk and a peripheral stalk. During catalysis, ATP synthesis in the catalytic domain of F(1) is coupled via a rotary mechanism of the central stalk subunits to proton translocation. Functionally, this protein is part of the stalk that links CF(0) to CF(1). It either transmits conformational changes from CF(0) to CF(1) or is implicated in proton conduction. In Synechococcus sp. (strain JA-3-3Ab) (Cyanobacteria bacterium Yellowstone A-Prime), this protein is ATP synthase subunit delta.